Here is an 823-residue protein sequence, read N- to C-terminus: Valine--tRNA ligase (823 aa).

Residues 52 to 62 (PTVSGVLHMGH) carry the 'HIGH' region motif. The short motif at 549-553 (KMSKS) is the 'KMSKS' region element. Residue K552 coordinates ATP.

Belongs to the class-I aminoacyl-tRNA synthetase family. ValS type 2 subfamily. As to quaternary structure, monomer.

The protein resides in the cytoplasm. It catalyses the reaction tRNA(Val) + L-valine + ATP = L-valyl-tRNA(Val) + AMP + diphosphate. Functionally, catalyzes the attachment of valine to tRNA(Val). As ValRS can inadvertently accommodate and process structurally similar amino acids such as threonine, to avoid such errors, it has a 'posttransfer' editing activity that hydrolyzes mischarged Thr-tRNA(Val) in a tRNA-dependent manner. This is Valine--tRNA ligase from Anaplasma marginale (strain St. Maries).